The primary structure comprises 78 residues: Large ribosomal subunit protein bL28 (78 aa).

Residues 1–20 (MSRVCQVTSKRPAVGNNRSH) are disordered.

This sequence belongs to the bacterial ribosomal protein bL28 family.

This Haemophilus ducreyi (strain 35000HP / ATCC 700724) protein is Large ribosomal subunit protein bL28.